We begin with the raw amino-acid sequence, 353 residues long: Major outer membrane protein (353 aa).

A signal peptide spans 1–20 (MKKTIVALAVAAVAATSANA).

As to quaternary structure, disulfide bond interactions within and between MOMP molecules and other components form high molecular-weight oligomers.

It localises to the cell outer membrane. Functionally, structural rigidity of the outer membrane of elementary bodies and porin forming, permitting diffusion of solutes through the intracellular reticulate body membrane. This chain is Major outer membrane protein (ompH), found in Pasteurella multocida.